Consider the following 324-residue polypeptide: Malate dehydrogenase (324 aa).

Residues 10-15 (GAGAVG) and D34 each bind NAD(+). The substrate site is built by R88 and R94. NAD(+)-binding positions include N101 and 124 to 126 (VTN). Positions 126 and 157 each coordinate substrate. H181 (proton acceptor) is an active-site residue.

It belongs to the LDH/MDH superfamily.

The enzyme catalyses (S)-malate + NAD(+) = oxaloacetate + NADH + H(+). Functionally, catalyzes the reversible oxidation of malate to oxaloacetate. This chain is Malate dehydrogenase (mdh), found in Picrophilus torridus (strain ATCC 700027 / DSM 9790 / JCM 10055 / NBRC 100828 / KAW 2/3).